The sequence spans 208 residues: Pyridoxine/pyridoxamine 5'-phosphate oxidase (208 aa).

Residues 53–58 (RTVLLK), 68–69 (YS), lysine 75, and glutamine 100 each bind FMN. A substrate-binding site is contributed by lysine 58. 3 residues coordinate substrate: tyrosine 118, arginine 122, and serine 126. FMN contacts are provided by residues 135 to 136 (QS) and tryptophan 180. 186-188 (RLH) contributes to the substrate binding site. Arginine 190 contributes to the FMN binding site.

This sequence belongs to the pyridoxamine 5'-phosphate oxidase family. As to quaternary structure, homodimer. FMN serves as cofactor.

It carries out the reaction pyridoxamine 5'-phosphate + O2 + H2O = pyridoxal 5'-phosphate + H2O2 + NH4(+). The catalysed reaction is pyridoxine 5'-phosphate + O2 = pyridoxal 5'-phosphate + H2O2. It functions in the pathway cofactor metabolism; pyridoxal 5'-phosphate salvage; pyridoxal 5'-phosphate from pyridoxamine 5'-phosphate: step 1/1. It participates in cofactor metabolism; pyridoxal 5'-phosphate salvage; pyridoxal 5'-phosphate from pyridoxine 5'-phosphate: step 1/1. Catalyzes the oxidation of either pyridoxine 5'-phosphate (PNP) or pyridoxamine 5'-phosphate (PMP) into pyridoxal 5'-phosphate (PLP). This is Pyridoxine/pyridoxamine 5'-phosphate oxidase from Xylella fastidiosa (strain Temecula1 / ATCC 700964).